A 144-amino-acid chain; its full sequence is Large ribosomal subunit protein uL15 (144 aa).

The disordered stretch occupies residues 1–53 (MRLNTLSPAEGSKHASKRLGRGIGSGLGKTGGRGHKGQKSRSGGGVRRGFEGG). Over residues 21–31 (RGIGSGLGKTG) the composition is skewed to gly residues.

This sequence belongs to the universal ribosomal protein uL15 family. Part of the 50S ribosomal subunit.

In terms of biological role, binds to the 23S rRNA. The protein is Large ribosomal subunit protein uL15 of Edwardsiella ictaluri (strain 93-146).